The following is a 301-amino-acid chain: MDSVDGLQCLTMTAENPPSGDLIPAPLVTCKLCLCEQSLDKMTMLQECQCIFCTPCLKQYMVLSIREGCGSPITCPDMVCLNHGTLQETEIACLVPLDEFQLYQRLKFEREVHMDPLRTWCPVADCQTVCHISAGDPGQPVLVECPSCHLKFCSCCKDAWHEESSCRDSQSAMPEHGALFGTDADAPIKQCPVCRIYIERNEGCAQMMCKNCKHTFCWYCLQNLDNDIFLRHYDKGPCRNKLGHSRASVMWNRTQVVGILVGLGVIALVTSPLLLLASPCIICCVCKSCRGKKKKHDPSTT.

Positions 26–242 (PLVTCKLCLC…YDKGPCRNKL (217 aa)) are TRIAD supradomain. Residues C30, C33, C53, C56, C121, C126, C145, C148, C153, C156, H161, C166, C191, and C194 each contribute to the Zn(2+) site. The RING-type 1 zinc-finger motif lies at 30 to 80 (CKLCLCEQSLDKMTMLQECQCIFCTPCLKQYMVLSIREGCGSPITCPDMVC). The segment at 101-166 (QLYQRLKFER…KDAWHEESSC (66 aa)) adopts an IBR-type zinc-finger fold. The segment at 191 to 220 (CPVCRIYIERNEGCAQMMCKNCKHTFCWYC) adopts an RING-type 2; atypical zinc-finger fold. C204 is a catalytic residue. The Zn(2+) site is built by C209, C212, C217, C220, H232, and C238. The chain crosses the membrane as a helical span at residues 256-276 (VVGILVGLGVIALVTSPLLLL).

This sequence belongs to the RBR family. RNF144 subfamily. Interacts with UBE2L3, UBE2L6 and LCMT2, as well as with BAX. Interacts with TBK1; this interaction inhibits TBK1 phosphorylation and 'Lys-63'-linked polyubiquitination. In terms of processing, auto-ubiquitinated.

Its subcellular location is the mitochondrion membrane. The protein localises to the cytoplasm. The enzyme catalyses [E2 ubiquitin-conjugating enzyme]-S-ubiquitinyl-L-cysteine + [acceptor protein]-L-lysine = [E2 ubiquitin-conjugating enzyme]-L-cysteine + [acceptor protein]-N(6)-ubiquitinyl-L-lysine.. It functions in the pathway protein modification; protein ubiquitination. In terms of biological role, E3 ubiquitin-protein ligase which accepts ubiquitin from E2 ubiquitin-conjugating enzymes UBE2L3 and UBE2L6 in the form of a thioester and then directly transfers the ubiquitin to targeted substrates such as LCMT2, thereby promoting their degradation. Induces apoptosis via a p53/TP53-dependent but caspase-independent mechanism. Plays a crucial role in maintaining the genomic stability by controlling the degradation of multiple proteins involved in mitotic progression and DNA damage. Regulates epithelial homeostasis by mediating degradation of CDKN1A and isoform 2 of TP63. Plays a regulatory role in innate immunity by negatively regulating IRF3 activation and IFN-beta production. Mechanistically, inhibits TBK1 phosphorylation and 'Lys-63'-linked polyubiquitination independently of its E3 ligase activity. Alternatively, promotes 'Lys-27' and 'Lys-33'-linked ubiquitination of IFIH1/MDA5, promoting selective autophagic degradation of IFIH1/MDA5 to inhibit antiviral response. This chain is E3 ubiquitin-protein ligase RNF144B (Rnf144b), found in Mus musculus (Mouse).